A 454-amino-acid chain; its full sequence is Cholesterol 7-desaturase nvd (454 aa).

Transmembrane regions (helical) follow at residues 13-33 and 47-67; these read VLCP…LGAG and TTLS…LWGW. Residues 117–221 form the Rieske domain; it reads WYRALDSHLL…SCELNGMVFV (105 aa). Positions 158, 160, 178, and 181 each coordinate [2Fe-2S] cluster.

Belongs to the cholesterol 7-desaturase family. It depends on [2Fe-2S] cluster as a cofactor.

It is found in the membrane. It catalyses the reaction cholesterol + NADPH + O2 + H(+) = 7-dehydrocholesterol + NADP(+) + 2 H2O. It carries out the reaction cholesterol + NADH + O2 + H(+) = 7-dehydrocholesterol + NAD(+) + 2 H2O. Its pathway is steroid hormone biosynthesis; dafachronic acid biosynthesis. Its function is as follows. Catalyzes the production of 7-dehydrocholesterol (7-DHC or cholesta-5,7-dien-3beta-ol) by inserting a double bond (desaturating) at the C7-C8 single bond of cholesterol. This reaction is the first step in the synthesis of the steroid hormone Delta(7)-dafachronic acid. The sequence is that of Cholesterol 7-desaturase nvd (nvd) from Xenopus laevis (African clawed frog).